The chain runs to 335 residues: MIEFHNVHKTYRVAGKEIPALHPTSLRVDSGQVFGIIGHSGAGKSTLLRLINRLETPSGGQIVVDGEDVTALDANGLRRFRQQVGMIFQHFNLLASRTVADNVAMPLTLAGDMPRKQIDQRVAELLERVGLSDHAKKYPAQLSGGQKQRVGIARALATKPKILLCDEATSALDPQTTASVLQLLAEINRELKLTIVLITHEMDVIRRVCDQVAVMDAGVIVEHGKVADVFLHPQHATTRRFVQEDEQIDENEQRDDFAHVQGRIVRLTFQGEATYAPLLGTVARETGVDYSILAGRIDRIKDTPYGQLTLAVTGGDMDAAFARFTAADVHMEVLR.

Residues 2 to 242 form the ABC transporter domain; it reads IEFHNVHKTY…PQHATTRRFV (241 aa). 38 to 45 provides a ligand contact to ATP; the sequence is GHSGAGKS.

The protein belongs to the ABC transporter superfamily. Methionine importer (TC 3.A.1.24) family. In terms of assembly, the complex is composed of two ATP-binding proteins (MetN), two transmembrane proteins (MetI) and a solute-binding protein (MetQ).

It localises to the cell inner membrane. The catalysed reaction is L-methionine(out) + ATP + H2O = L-methionine(in) + ADP + phosphate + H(+). It carries out the reaction D-methionine(out) + ATP + H2O = D-methionine(in) + ADP + phosphate + H(+). In terms of biological role, part of the ABC transporter complex MetNIQ involved in methionine import. Responsible for energy coupling to the transport system. This chain is Methionine import ATP-binding protein MetN 1, found in Pseudomonas syringae pv. syringae (strain B728a).